Here is a 311-residue protein sequence, read N- to C-terminus: MSNAEHLANIMVERFISAVKNGVDLVPVVADSTSTAKIAPFIKEFPDRLVNVGIAEQSLVGCAAGLALGGKVAVTCNAAPFLISRANEQVKVDVCYNNTNVKLFGLNSGASYGPLASTHHSIDDIGVMRGFGNIQIFAPSSPNECRQIIDYAINYVGPVYIRLDGKELPEIHNDDYEFVPGQIDVLRKGGKIALVAMGSTVYEIVDAAVKLAEKGIEVTVVNVPSIRPCDTEALFNAIKDCKYVISVEEHNINGGVGSLVAEVIAEHGAPITLKRRGIADGGYALAGDRKSMRKHHGIDADSIVDLALSLN.

Belongs to the transketolase family. Probable heterodimer composed of AptA and AptB. Thiamine diphosphate serves as cofactor.

The catalysed reaction is apulose 4-phosphate + D-glyceraldehyde 3-phosphate = D-xylulose 5-phosphate + dihydroxyacetone phosphate. It functions in the pathway carbohydrate metabolism. In terms of biological role, involved in catabolism of D-apiose. Catalyzes the transfer of the glycolaldehyde group from apulose-4-phosphate to D-glyceraldehyde 3-phosphate, generating dihydroxyacetone phosphate and D-xylulose-5-phosphate. This is Apulose-4-phosphate transketolase subunit B from Actinobacillus succinogenes (strain ATCC 55618 / DSM 22257 / CCUG 43843 / 130Z).